Reading from the N-terminus, the 309-residue chain is Methionyl-tRNA formyltransferase (309 aa).

110-113 (SLLP) lines the (6S)-5,6,7,8-tetrahydrofolate pocket.

It belongs to the Fmt family.

It catalyses the reaction L-methionyl-tRNA(fMet) + (6R)-10-formyltetrahydrofolate = N-formyl-L-methionyl-tRNA(fMet) + (6S)-5,6,7,8-tetrahydrofolate + H(+). Functionally, attaches a formyl group to the free amino group of methionyl-tRNA(fMet). The formyl group appears to play a dual role in the initiator identity of N-formylmethionyl-tRNA by promoting its recognition by IF2 and preventing the misappropriation of this tRNA by the elongation apparatus. The chain is Methionyl-tRNA formyltransferase from Caldanaerobacter subterraneus subsp. tengcongensis (strain DSM 15242 / JCM 11007 / NBRC 100824 / MB4) (Thermoanaerobacter tengcongensis).